The sequence spans 172 residues: MNHFELFNLPVALDIDLASLKSNFLSLQQQYHPDKAADKDQALIKSSEINQAFKTLSQVDSRAAYLLALKKQDHHLDQSISDFEFLQSALELREQLDEATSSEHLRTLRLEVQQWIDGLVREFKIDYSEEDWSEARDTVRKLRFFQRVLNDIDKAEDQLLDDEDSFDLDDDF.

The region spanning 2 to 69 (NHFELFNLPV…DSRAAYLLAL (68 aa)) is the J domain.

The protein belongs to the HscB family. In terms of assembly, interacts with HscA and stimulates its ATPase activity.

Functionally, co-chaperone involved in the maturation of iron-sulfur cluster-containing proteins. Seems to help targeting proteins to be folded toward HscA. The protein is Co-chaperone protein HscB homolog of Acinetobacter baumannii (strain SDF).